A 412-amino-acid chain; its full sequence is Serine hydroxymethyltransferase (412 aa).

(6S)-5,6,7,8-tetrahydrofolate-binding positions include Leu117 and 121–123 (GHL). Position 226 is an N6-(pyridoxal phosphate)lysine (Lys226).

This sequence belongs to the SHMT family. Homodimer. It depends on pyridoxal 5'-phosphate as a cofactor.

The protein resides in the cytoplasm. The enzyme catalyses (6R)-5,10-methylene-5,6,7,8-tetrahydrofolate + glycine + H2O = (6S)-5,6,7,8-tetrahydrofolate + L-serine. It functions in the pathway one-carbon metabolism; tetrahydrofolate interconversion. It participates in amino-acid biosynthesis; glycine biosynthesis; glycine from L-serine: step 1/1. In terms of biological role, catalyzes the reversible interconversion of serine and glycine with tetrahydrofolate (THF) serving as the one-carbon carrier. This reaction serves as the major source of one-carbon groups required for the biosynthesis of purines, thymidylate, methionine, and other important biomolecules. Also exhibits THF-independent aldolase activity toward beta-hydroxyamino acids, producing glycine and aldehydes, via a retro-aldol mechanism. This Staphylococcus aureus (strain USA300) protein is Serine hydroxymethyltransferase.